Consider the following 483-residue polypeptide: UDP-N-acetylmuramyl-tripeptide synthetase (483 aa).

Ser-43 is a binding site for UDP-N-acetyl-alpha-D-muramoyl-L-alanyl-D-glutamate. Residue 116 to 122 (GTKGKTT) coordinates ATP. UDP-N-acetyl-alpha-D-muramoyl-L-alanyl-D-glutamate contacts are provided by residues 160–161 (TT), Ser-187, and Arg-195. At Lys-229 the chain carries N6-carboxylysine.

Belongs to the MurCDEF family. MurE subfamily. Post-translationally, carboxylation is probably crucial for Mg(2+) binding and, consequently, for the gamma-phosphate positioning of ATP.

The protein resides in the cytoplasm. It participates in cell wall biogenesis; peptidoglycan biosynthesis. Catalyzes the addition of an amino acid to the nucleotide precursor UDP-N-acetylmuramoyl-L-alanyl-D-glutamate (UMAG) in the biosynthesis of bacterial cell-wall peptidoglycan. This chain is UDP-N-acetylmuramyl-tripeptide synthetase, found in Lactococcus lactis subsp. cremoris (strain SK11).